Here is a 357-residue protein sequence, read N- to C-terminus: GTPase Obg (357 aa).

The region spanning 1 to 159 is the Obg domain; the sequence is MKFVDEAFID…KSLKLELKVL (159 aa). The OBG-type G domain maps to 160 to 334; the sequence is ADVGLLGMPN…LVQSIFQHVH (175 aa). Residues 166 to 173, 191 to 195, 213 to 216, 284 to 287, and 315 to 317 each bind GTP; these read GMPNAGKS, FTTLH, DIPG, NKLD, and SAL. Ser173 and Thr193 together coordinate Mg(2+).

The protein belongs to the TRAFAC class OBG-HflX-like GTPase superfamily. OBG GTPase family. Monomer. It depends on Mg(2+) as a cofactor.

The protein localises to the cytoplasm. Functionally, an essential GTPase which binds GTP, GDP and possibly (p)ppGpp with moderate affinity, with high nucleotide exchange rates and a fairly low GTP hydrolysis rate. Plays a role in control of the cell cycle, stress response, ribosome biogenesis and in those bacteria that undergo differentiation, in morphogenesis control. This chain is GTPase Obg, found in Acidovorax sp. (strain JS42).